The primary structure comprises 459 residues: ATP-dependent protease ATPase subunit HslU (459 aa).

Residues Val18, 60 to 65 (GVGKTE), Asp269, Glu337, and Arg409 each bind ATP.

It belongs to the ClpX chaperone family. HslU subfamily. A double ring-shaped homohexamer of HslV is capped on each side by a ring-shaped HslU homohexamer. The assembly of the HslU/HslV complex is dependent on binding of ATP.

It localises to the cytoplasm. Its function is as follows. ATPase subunit of a proteasome-like degradation complex; this subunit has chaperone activity. The binding of ATP and its subsequent hydrolysis by HslU are essential for unfolding of protein substrates subsequently hydrolyzed by HslV. HslU recognizes the N-terminal part of its protein substrates and unfolds these before they are guided to HslV for hydrolysis. The polypeptide is ATP-dependent protease ATPase subunit HslU (Myxococcus xanthus (strain DK1622)).